A 477-amino-acid polypeptide reads, in one-letter code: POC1 centriolar protein homolog B (477 aa).

WD repeat units lie at residues 16-55 (GHKA…RAYR), 58-97 (GHKD…KSSE), 100-139 (AHTA…FLYS), 142-181 (RHTH…CVNN), 183-223 (SDSV…LLQH), 226-265 (VHSC…LIYT), and 268-307 (GHTG…VHYR). The stretch at 449–469 (EQRLSLTEDKLKDCLENQQKL) forms a coiled coil.

The protein belongs to the WD repeat POC1 family. Interacts with POC1A. Interacts with FAM161A. Interacts with CEP44; the interaction is direct and recruits POC1B to centriolar microtubules. Forms a microtubule-associated complex with POC5, CETN2 and FAM161A. Interacts with CCDC15. Post-translationally, phosphorylated in mitotic cells that may be mediated by CDK1.

Its subcellular location is the cytoplasm. It is found in the cytoskeleton. The protein localises to the microtubule organizing center. It localises to the centrosome. The protein resides in the centriole. Its subcellular location is the cilium basal body. It is found in the spindle pole. Functionally, plays an important role in centriole assembly and/or stability and ciliogenesis. Involved in early steps of centriole duplication, as well as in the later steps of centriole length control. Acts in concert with POC1A to ensure centriole integrity and proper mitotic spindle formation. Required for primary cilia formation, ciliary length and also cell proliferation. Required for retinal integrity. Acts as a positive regulator of centriole elongation. The chain is POC1 centriolar protein homolog B (Poc1b) from Rattus norvegicus (Rat).